We begin with the raw amino-acid sequence, 385 residues long: MNIHEFQAKELLRDFGINVADGIMVVSVDDALNAAKKLGGSVWAVKAQIHAGGRGLGGGVKIAKSLDEVKEYASKILGMTLVTKQTGPEGKLVKKLYIEKGTNIDKEYYLSLTFDRINECIAVIASADGGMNIEEVDHDKIITIRIDPQIGLRDFHSLAIADFLNLDKDLSVKLHVLLSKLYRLYWQTDSNLVEINPLVLTKENDLIPLDAKMGFDDSALFRQEKIANMRDIDEEEPSELEAKTYGLSYVKLDGNIGCMVNGAGLAMGTMDTINGVGGKPANFLDVGGGANPQTVAKAFEIILRDKNVKSIFVNIFGGIVRCDRIANGILEATKLTKVEVPVIVRLDGTNAKEAAEILKQANITNIISAPDLESGAKMSVELANK.

An ATP-grasp domain is found at 9 to 241 (KELLRDFGIN…IDEEEPSELE (233 aa)). Residues K46, 53 to 55 (GRG), E99, T102, and E107 each bind ATP. N196 and D210 together coordinate Mg(2+). Substrate-binding positions include N261 and 318 to 320 (GIV).

This sequence belongs to the succinate/malate CoA ligase beta subunit family. As to quaternary structure, heterotetramer of two alpha and two beta subunits. Mg(2+) is required as a cofactor.

It catalyses the reaction succinate + ATP + CoA = succinyl-CoA + ADP + phosphate. The catalysed reaction is GTP + succinate + CoA = succinyl-CoA + GDP + phosphate. It participates in carbohydrate metabolism; tricarboxylic acid cycle; succinate from succinyl-CoA (ligase route): step 1/1. Succinyl-CoA synthetase functions in the citric acid cycle (TCA), coupling the hydrolysis of succinyl-CoA to the synthesis of either ATP or GTP and thus represents the only step of substrate-level phosphorylation in the TCA. The beta subunit provides nucleotide specificity of the enzyme and binds the substrate succinate, while the binding sites for coenzyme A and phosphate are found in the alpha subunit. This chain is Succinate--CoA ligase [ADP-forming] subunit beta, found in Campylobacter fetus subsp. fetus (strain 82-40).